We begin with the raw amino-acid sequence, 579 residues long: Nuclear hormone receptor family member nhr-22 (579 aa).

Positions 93–173 (SRSCHVCSSP…AGMRRELVQA (81 aa)) form a DNA-binding region, nuclear receptor. 2 consecutive NR C4-type zinc fingers follow at residues 96-117 (CHVC…CKAC) and 133-161 (CIGT…FIKC). The segment covering 233-242 (LSPDPSSSQP) has biased composition (low complexity). Residues 233-256 (LSPDPSSSQPLDMTVTPPPLHRST) form a disordered region. The 274-residue stretch at 304 to 577 (EVENKIFELV…SIMYDLLSFR (274 aa)) folds into the NR LBD domain.

Belongs to the nuclear hormone receptor family.

Its subcellular location is the nucleus. In terms of biological role, orphan nuclear receptor. The polypeptide is Nuclear hormone receptor family member nhr-22 (nhr-22) (Caenorhabditis elegans).